The following is a 125-amino-acid chain: Small ribosomal subunit protein bS6 (125 aa).

The segment at 99–125 (ASPMVKAKDERRASAEVENNDFEDAEE) is disordered. Residues 104–113 (KAKDERRASA) are compositionally biased toward basic and acidic residues. A compositionally biased stretch (acidic residues) spans 116–125 (ENNDFEDAEE).

The protein belongs to the bacterial ribosomal protein bS6 family.

Functionally, binds together with bS18 to 16S ribosomal RNA. This chain is Small ribosomal subunit protein bS6, found in Mannheimia succiniciproducens (strain KCTC 0769BP / MBEL55E).